The chain runs to 120 residues: Large ribosomal subunit protein bL19 (120 aa).

This sequence belongs to the bacterial ribosomal protein bL19 family.

This protein is located at the 30S-50S ribosomal subunit interface and may play a role in the structure and function of the aminoacyl-tRNA binding site. The sequence is that of Large ribosomal subunit protein bL19 from Thermodesulfovibrio yellowstonii (strain ATCC 51303 / DSM 11347 / YP87).